We begin with the raw amino-acid sequence, 87 residues long: Small ribosomal subunit protein bS20 (87 aa).

Residues 1–15 (MANHKSAMKRIKQTA) show a composition bias toward basic residues. The segment at 1–27 (MANHKSAMKRIKQTAKRTERNKHERST) is disordered. The segment covering 16–27 (KRTERNKHERST) has biased composition (basic and acidic residues).

Belongs to the bacterial ribosomal protein bS20 family.

Its function is as follows. Binds directly to 16S ribosomal RNA. This is Small ribosomal subunit protein bS20 from Citrifermentans bemidjiense (strain ATCC BAA-1014 / DSM 16622 / JCM 12645 / Bem) (Geobacter bemidjiensis).